The following is a 242-amino-acid chain: 1-(5-phosphoribosyl)-5-[(5-phosphoribosylamino)methylideneamino] imidazole-4-carboxamide isomerase (242 aa).

The active-site Proton acceptor is the D10. D132 acts as the Proton donor in catalysis.

This sequence belongs to the HisA/HisF family.

It is found in the cytoplasm. The enzyme catalyses 1-(5-phospho-beta-D-ribosyl)-5-[(5-phospho-beta-D-ribosylamino)methylideneamino]imidazole-4-carboxamide = 5-[(5-phospho-1-deoxy-D-ribulos-1-ylimino)methylamino]-1-(5-phospho-beta-D-ribosyl)imidazole-4-carboxamide. It participates in amino-acid biosynthesis; L-histidine biosynthesis; L-histidine from 5-phospho-alpha-D-ribose 1-diphosphate: step 4/9. The chain is 1-(5-phosphoribosyl)-5-[(5-phosphoribosylamino)methylideneamino] imidazole-4-carboxamide isomerase from Methanothrix thermoacetophila (strain DSM 6194 / JCM 14653 / NBRC 101360 / PT) (Methanosaeta thermophila).